The chain runs to 324 residues: Aspartate carbamoyltransferase catalytic subunit (324 aa).

Carbamoyl phosphate contacts are provided by arginine 55 and threonine 56. Lysine 83 lines the L-aspartate pocket. Positions 105, 135, and 138 each coordinate carbamoyl phosphate. 2 residues coordinate L-aspartate: arginine 173 and arginine 227. Residues glycine 268 and proline 269 each coordinate carbamoyl phosphate.

Belongs to the aspartate/ornithine carbamoyltransferase superfamily. ATCase family. As to quaternary structure, heterododecamer (2C3:3R2) of six catalytic PyrB chains organized as two trimers (C3), and six regulatory PyrI chains organized as three dimers (R2).

It carries out the reaction carbamoyl phosphate + L-aspartate = N-carbamoyl-L-aspartate + phosphate + H(+). Its pathway is pyrimidine metabolism; UMP biosynthesis via de novo pathway; (S)-dihydroorotate from bicarbonate: step 2/3. In terms of biological role, catalyzes the condensation of carbamoyl phosphate and aspartate to form carbamoyl aspartate and inorganic phosphate, the committed step in the de novo pyrimidine nucleotide biosynthesis pathway. This Nocardioides sp. (strain ATCC BAA-499 / JS614) protein is Aspartate carbamoyltransferase catalytic subunit.